Here is a 439-residue protein sequence, read N- to C-terminus: Ornithine aminotransferase, mitochondrial (439 aa).

The N-terminal 25 residues, 1 to 25 (MLSKLARLQTVAGLGLGVHSSVASA), are a transit peptide targeting the mitochondrion. N6-acetyllysine occurs at positions 49 and 66. Position 102 is an N6-succinyllysine (K102). At K107 the chain carries N6-acetyllysine; alternate. At K107 the chain carries N6-succinyllysine; alternate. Residue K292 is modified to N6-(pyridoxal phosphate)lysine. At K362 the chain carries N6-acetyllysine; alternate. Residue K362 is modified to N6-succinyllysine; alternate. K386 and K392 each carry N6-acetyllysine. K405 bears the N6-acetyllysine; alternate mark. The residue at position 405 (K405) is an N6-succinyllysine; alternate. K421 bears the N6-acetyllysine mark.

The protein belongs to the class-III pyridoxal-phosphate-dependent aminotransferase family. Homohexamer. Pyridoxal 5'-phosphate serves as cofactor.

The protein resides in the mitochondrion matrix. The catalysed reaction is L-ornithine + 2-oxoglutarate = L-glutamate 5-semialdehyde + L-glutamate. The protein operates within amino-acid biosynthesis; L-proline biosynthesis; L-glutamate 5-semialdehyde from L-ornithine: step 1/1. Catalyzes the reversible interconversion of L-ornithine and 2-oxoglutarate to L-glutamate semialdehyde and L-glutamate. This chain is Ornithine aminotransferase, mitochondrial (OAT), found in Bos taurus (Bovine).